A 93-amino-acid polypeptide reads, in one-letter code: Mammaglobin-A (93 aa).

An N-terminal signal peptide occupies residues 1–18 (MKLLMVLMLAALSQHCYA). Asn-53 and Asn-68 each carry an N-linked (GlcNAc...) asparagine glycan.

This sequence belongs to the secretoglobin family. Lipophilin subfamily. As to expression, mammary gland specific. Over-expressed in breast cancer.

Its subcellular location is the secreted. The sequence is that of Mammaglobin-A (SCGB2A2) from Homo sapiens (Human).